The primary structure comprises 116 residues: Prefoldin subunit beta (116 aa).

The protein belongs to the prefoldin subunit beta family. As to quaternary structure, heterohexamer of two alpha and four beta subunits.

The protein resides in the cytoplasm. Its function is as follows. Molecular chaperone capable of stabilizing a range of proteins. Seems to fulfill an ATP-independent, HSP70-like function in archaeal de novo protein folding. The chain is Prefoldin subunit beta (pfdB) from Archaeoglobus fulgidus (strain ATCC 49558 / DSM 4304 / JCM 9628 / NBRC 100126 / VC-16).